Reading from the N-terminus, the 367-residue chain is 3-isopropylmalate dehydrogenase (367 aa).

NAD(+) is bound at residue 77–90 (GPKWDAVPYEVRPE). Positions 97, 107, 135, and 226 each coordinate substrate. Mg(2+)-binding residues include Asp-226, Asp-250, and Asp-254. Residue 290–302 (GSAPDIAGKGIAN) participates in NAD(+) binding.

It belongs to the isocitrate and isopropylmalate dehydrogenases family. LeuB type 1 subfamily. Homodimer. It depends on Mg(2+) as a cofactor. Requires Mn(2+) as cofactor.

The protein resides in the cytoplasm. It catalyses the reaction (2R,3S)-3-isopropylmalate + NAD(+) = 4-methyl-2-oxopentanoate + CO2 + NADH. It functions in the pathway amino-acid biosynthesis; L-leucine biosynthesis; L-leucine from 3-methyl-2-oxobutanoate: step 3/4. In terms of biological role, catalyzes the oxidation of 3-carboxy-2-hydroxy-4-methylpentanoate (3-isopropylmalate) to 3-carboxy-4-methyl-2-oxopentanoate. The product decarboxylates to 4-methyl-2 oxopentanoate. This is 3-isopropylmalate dehydrogenase from Mesorhizobium japonicum (strain LMG 29417 / CECT 9101 / MAFF 303099) (Mesorhizobium loti (strain MAFF 303099)).